Reading from the N-terminus, the 95-residue chain is Putative small ubiquitin-related modifier 7 (95 aa).

The region spanning 13–90 is the Ubiquitin-like domain; that stretch reads SHITIKIKSQ…IDAFVDQIAG (78 aa). G90 is covalently cross-linked (Glycyl lysine isopeptide (Gly-Lys) (interchain with K-? in acceptor proteins)).

Belongs to the ubiquitin family. SUMO subfamily. In terms of assembly, interacts with SAE2, SCE1, SIZ1 and MMS21 Covalently attached to a number of proteins.

It localises to the nucleus. The protein localises to the cytoplasm. Its function is as follows. Ubiquitin-like protein which can be covalently attached to target lysines as a monomer. Does not seem to be involved in protein degradation and may function as an antagonist of ubiquitin in the degradation process. This is Putative small ubiquitin-related modifier 7 (SUMO7) from Arabidopsis thaliana (Mouse-ear cress).